Here is a 1011-residue protein sequence, read N- to C-terminus: PE-PGRS family protein PE_PGRS30 (1011 aa).

The PE domain maps to 1–93; the sequence is MSFLLVEPDL…AAAYTGAEAA (93 aa). Positions 130 to 696 are PGRS domain; sequence SNAGGNGGPG…GGTGGTGGVL (567 aa). Residues 595-696 show a composition bias toward gly residues; it reads GGAGGTGGDH…GGTGGTGGVL (102 aa). The disordered stretch occupies residues 595 to 701; that stretch reads GGAGGTGGDH…TGGVLFGQSG (107 aa). Positions 697-1011 are C-terminal domain; that stretch reads FGQSGSSGPP…PTQLAQAIAP (315 aa).

This sequence belongs to the mycobacterial PE family. PGRS subfamily.

The protein resides in the secreted. It localises to the cell wall. The protein localises to the cell surface. Its function is as follows. Mediates suppression of pro-inflammatory immune response in macrophages via modulation of host cytokine response. Required for full virulence. Involved in inhibition of phago-lysosome fusion. The sequence is that of PE-PGRS family protein PE_PGRS30 from Mycobacterium tuberculosis (strain ATCC 25618 / H37Rv).